The sequence spans 192 residues: Orotate phosphoribosyltransferase (192 aa).

Glu116 to Ser124 serves as a coordination point for 5-phospho-alpha-D-ribose 1-diphosphate. Thr120 and Arg148 together coordinate orotate.

This sequence belongs to the purine/pyrimidine phosphoribosyltransferase family. PyrE subfamily. As to quaternary structure, homodimer. It depends on Mg(2+) as a cofactor.

The catalysed reaction is orotidine 5'-phosphate + diphosphate = orotate + 5-phospho-alpha-D-ribose 1-diphosphate. The protein operates within pyrimidine metabolism; UMP biosynthesis via de novo pathway; UMP from orotate: step 1/2. Catalyzes the transfer of a ribosyl phosphate group from 5-phosphoribose 1-diphosphate to orotate, leading to the formation of orotidine monophosphate (OMP). The protein is Orotate phosphoribosyltransferase of Bartonella bacilliformis (strain ATCC 35685 / KC583 / Herrer 020/F12,63).